A 386-amino-acid chain; its full sequence is DNA-directed RNA polymerase subunit Rpo1C (386 aa).

It belongs to the RNA polymerase beta' chain family. Part of the RNA polymerase complex.

It is found in the cytoplasm. The enzyme catalyses RNA(n) + a ribonucleoside 5'-triphosphate = RNA(n+1) + diphosphate. Its function is as follows. DNA-dependent RNA polymerase (RNAP) catalyzes the transcription of DNA into RNA using the four ribonucleoside triphosphates as substrates. Forms part of the jaw domain. The sequence is that of DNA-directed RNA polymerase subunit Rpo1C from Methanococcus vannielii (strain ATCC 35089 / DSM 1224 / JCM 13029 / OCM 148 / SB).